The sequence spans 208 residues: NAD(P)H-hydrate epimerase (208 aa).

Residues 11 to 208 form the YjeF N-terminal domain; the sequence is MRAKDQFTIN…VIVADDMGTY (198 aa). 59–63 provides a ligand contact to (6S)-NADPHX; the sequence is NNGGD. Positions 60 and 122 each coordinate K(+). (6S)-NADPHX-binding positions include 126–132, Tyr137, and Asp155; that span reads GIGIDRP. Ser158 contacts K(+).

The protein belongs to the NnrE/AIBP family. Requires K(+) as cofactor.

It carries out the reaction (6R)-NADHX = (6S)-NADHX. The enzyme catalyses (6R)-NADPHX = (6S)-NADPHX. In terms of biological role, catalyzes the epimerization of the S- and R-forms of NAD(P)HX, a damaged form of NAD(P)H that is a result of enzymatic or heat-dependent hydration. This is a prerequisite for the S-specific NAD(P)H-hydrate dehydratase to allow the repair of both epimers of NAD(P)HX. The sequence is that of NAD(P)H-hydrate epimerase from Limosilactobacillus fermentum (strain NBRC 3956 / LMG 18251) (Lactobacillus fermentum).